Here is a 379-residue protein sequence, read N- to C-terminus: NADH-rubredoxin oxidoreductase (379 aa).

Cystine bridges form between Cys26–Cys286 and Cys137–Cys216. FAD contacts are provided by residues 33–35, Arg42, Ala79, and Tyr125; that span reads NSE. FAD is bound at residue Asp259.

This sequence belongs to the FAD-dependent oxidoreductase family. As to quaternary structure, monomer. It depends on FAD as a cofactor.

The catalysed reaction is 2 reduced [rubredoxin] + NAD(+) + H(+) = 2 oxidized [rubredoxin] + NADH. Its function is as follows. Catalyzes the NADH-dependent reduction of rubredoxin (Rd). NADPH is a very poor electron donor compared to NADH. Functions as an intermediate component in the electron transfer chain: NADH-&gt;NROR-&gt;Rd-&gt;FprA1/2. Also functions as an intermediate component in the electron transfer chains from NADH to revRbr and Dfx. Therefore, is a key electron carrier in an efficient multienzyme complex that can scavenge O(2) and reactive oxygen species (ROS), and thus plays an important role in the oxidative stress defense system in C.acetobutylicum, an obligate anaerobic bacterium. This Clostridium acetobutylicum (strain ATCC 824 / DSM 792 / JCM 1419 / IAM 19013 / LMG 5710 / NBRC 13948 / NRRL B-527 / VKM B-1787 / 2291 / W) protein is NADH-rubredoxin oxidoreductase (nroR).